Reading from the N-terminus, the 447-residue chain is Phosphoglucosamine mutase (447 aa).

Catalysis depends on Ser-100, which acts as the Phosphoserine intermediate. Mg(2+)-binding residues include Ser-100, Asp-240, Asp-242, and Asp-244. Residue Ser-100 is modified to Phosphoserine.

It belongs to the phosphohexose mutase family. Mg(2+) is required as a cofactor. Post-translationally, activated by phosphorylation.

It catalyses the reaction alpha-D-glucosamine 1-phosphate = D-glucosamine 6-phosphate. Its function is as follows. Catalyzes the conversion of glucosamine-6-phosphate to glucosamine-1-phosphate. This is Phosphoglucosamine mutase from Anoxybacillus flavithermus (strain DSM 21510 / WK1).